Here is a 351-residue protein sequence, read N- to C-terminus: N-acetyl-gamma-glutamyl-phosphate reductase (351 aa).

Cys-154 is an active-site residue.

Belongs to the NAGSA dehydrogenase family. Type 1 subfamily.

The protein localises to the cytoplasm. It catalyses the reaction N-acetyl-L-glutamate 5-semialdehyde + phosphate + NADP(+) = N-acetyl-L-glutamyl 5-phosphate + NADPH + H(+). It participates in amino-acid biosynthesis; L-arginine biosynthesis; N(2)-acetyl-L-ornithine from L-glutamate: step 3/4. Catalyzes the NADPH-dependent reduction of N-acetyl-5-glutamyl phosphate to yield N-acetyl-L-glutamate 5-semialdehyde. The polypeptide is N-acetyl-gamma-glutamyl-phosphate reductase (Prochlorococcus marinus subsp. pastoris (strain CCMP1986 / NIES-2087 / MED4)).